The sequence spans 306 residues: MGERSAPTRRVDPLGGLLVVDKDGGMTSHDVVARCRKILGTRKIGHAGTLDPMATGVLVLGVERATKLLGLLTLTTKAYTATIRLGSATTTDDAEGEVLTTVPAGHLGDAEVAAGVAALTGDIQQVPATVSAIKIGGERAYARHRAGEQVELAARPVTVSRFEVLARRDVAGFVDLDVVVECSSGTYVRALARDLGAALGVGGHLTALRRTRVGPFTLDHARTLDALADEPRLNLDMDEAVRIAFPHRAIDAREAESLRDGRWLDPVGIPGVYAALTADGTAIALLEEKGKRASPVFVVRPRGLVD.

D51 (nucleophile) is an active-site residue.

The protein belongs to the pseudouridine synthase TruB family. Type 1 subfamily.

The enzyme catalyses uridine(55) in tRNA = pseudouridine(55) in tRNA. Responsible for synthesis of pseudouridine from uracil-55 in the psi GC loop of transfer RNAs. The polypeptide is tRNA pseudouridine synthase B (Nocardia farcinica (strain IFM 10152)).